We begin with the raw amino-acid sequence, 307 residues long: Ribosomal RNA small subunit methyltransferase H (307 aa).

S-adenosyl-L-methionine is bound by residues 31–33, aspartate 51, tyrosine 83, aspartate 97, and glutamine 104; that span reads GGH.

Belongs to the methyltransferase superfamily. RsmH family.

Its subcellular location is the cytoplasm. It catalyses the reaction cytidine(1402) in 16S rRNA + S-adenosyl-L-methionine = N(4)-methylcytidine(1402) in 16S rRNA + S-adenosyl-L-homocysteine + H(+). Specifically methylates the N4 position of cytidine in position 1402 (C1402) of 16S rRNA. This Buchnera aphidicola subsp. Cinara cedri (strain Cc) protein is Ribosomal RNA small subunit methyltransferase H.